Here is a 2184-residue protein sequence, read N- to C-terminus: Genome polyprotein (2184 aa).

Residue glycine 2 is the site of N-myristoyl glycine; by host attachment. The Cytoplasmic portion of the chain corresponds to 2–1494; that stretch reads GAQVSTQKTG…HVSRAFICLQ (1493 aa). The tract at residues 567–583 is amphipathic alpha-helix; sequence FYQGDVQNAVEGAMVRV. Catalysis depends on for protease 2A activity residues histidine 871 and aspartate 889. Positions 906 and 908 each coordinate Zn(2+). The For protease 2A activity role is filled by cysteine 960. Cysteine 966 and histidine 968 together coordinate Zn(2+). The interval 1100-1172 is membrane-binding; that stretch reads NNGWLKKFTE…EQSAPSQGDQ (73 aa). Residues 1100–1238 form an oligomerization region; sequence NNGWLKKFTE…SPGAGKSVAT (139 aa). Residues 1121 to 1125 form an RNA-binding region; the sequence is AIKIQ. Residues 1204–1360 form the SF3 helicase domain; it reads EKKMSNYIQF…SMYSQNGKIN (157 aa). Zn(2+) is bound by residues cysteine 1368, cysteine 1380, and cysteine 1385. The C4-type; degenerate zinc-finger motif lies at 1368-1385; the sequence is CDEDCCPVNFKKCCPLVC. The segment at 1412–1419 is RNA-binding; the sequence is EYNHRHSV. Positions 1423-1428 are oligomerization; the sequence is LEALFQ. Residues 1495 to 1510 lie within the membrane without spanning it; that stretch reads ALTTFVSVAGIIYIIY. The Cytoplasmic segment spans residues 1511-2184; that stretch reads KLFAGFQGAY…TLRRKWLDSF (674 aa). Position 1520 is an O-(5'-phospho-RNA)-tyrosine (tyrosine 1520). Residues 1540-1718 enclose the Peptidase C3 domain; that stretch reads GPAFEFAVAM…FSAALLRHYF (179 aa). Active-site for protease 3C activity residues include histidine 1579, glutamate 1610, and cysteine 1686. A RdRp catalytic domain is found at 1949-2065; sequence GHLIAFDYSG…SYPWPIDASL (117 aa). 2 residues coordinate Mg(2+): aspartate 1955 and aspartate 2051.

The protein belongs to the picornaviruses polyprotein family. Interacts with capsid protein VP1 and capsid protein VP3 to form heterotrimeric protomers. In terms of assembly, interacts with capsid protein VP0, and capsid protein VP3 to form heterotrimeric protomers. Five protomers subsequently associate to form pentamers which serve as building blocks for the capsid. Interacts with capsid protein VP2, capsid protein VP3 and capsid protein VP4 following cleavage of capsid protein VP0. As to quaternary structure, interacts with capsid protein VP1 and capsid protein VP3 in the mature capsid. Interacts with capsid protein VP0 and capsid protein VP1 to form heterotrimeric protomers. Five protomers subsequently associate to form pentamers which serve as building blocks for the capsid. Interacts with capsid protein VP4 in the mature capsid. Interacts with protein 2C; this interaction may be important for virion morphogenesis. In terms of assembly, interacts with capsid protein VP1 and capsid protein VP3. As to quaternary structure, homodimer. Homohexamer; forms a hexameric ring structure with 6-fold symmetry characteristic of AAA+ ATPases. Interacts (via N-terminus) with host RTN3 (via reticulon domain); this interaction is important for viral replication. Interacts with capsid protein VP3; this interaction may be important for virion morphogenesis. In terms of assembly, interacts with protein 3CD. As to quaternary structure, homodimer. Interacts with host GBF1. Interacts (via GOLD domain) with host ACBD3 (via GOLD domain); this interaction allows the formation of a viral protein 3A/ACBD3 heterotetramer with a 2:2 stoichiometry, which will stimulate the recruitment of host PI4KB in order to synthesize PI4P at the viral RNA replication sites. Interacts with RNA-directed RNA polymerase. In terms of assembly, interacts with protein 3AB and with RNA-directed RNA polymerase. As to quaternary structure, interacts with Viral protein genome-linked and with protein 3CD. The cofactor is Mg(2+). Specific enzymatic cleavages in vivo by the viral proteases yield processing intermediates and the mature proteins. Post-translationally, myristoylation is required for the formation of pentamers during virus assembly. Further assembly of 12 pentamers and a molecule of genomic RNA generates the provirion. In terms of processing, during virion maturation, immature virions are rendered infectious following cleavage of VP0 into VP4 and VP2. This maturation seems to be an autocatalytic event triggered by the presence of RNA in the capsid and it is followed by a conformational change infectious virion. Myristoylation is required during RNA encapsidation and formation of the mature virus particle. Post-translationally, VPg is uridylylated by the polymerase into VPg-pUpU. This acts as a nucleotide-peptide primer for the genomic RNA replication.

It is found in the virion. The protein resides in the host cytoplasm. The protein localises to the host cytoplasmic vesicle membrane. It localises to the host nucleus. The enzyme catalyses a ribonucleoside 5'-triphosphate + H2O = a ribonucleoside 5'-diphosphate + phosphate + H(+). The catalysed reaction is Selective cleavage of Tyr-|-Gly bond in the picornavirus polyprotein.. It carries out the reaction RNA(n) + a ribonucleoside 5'-triphosphate = RNA(n+1) + diphosphate. It catalyses the reaction Selective cleavage of Gln-|-Gly bond in the poliovirus polyprotein. In other picornavirus reactions Glu may be substituted for Gln, and Ser or Thr for Gly.. With respect to regulation, replication or transcription is subject to high level of random mutations by the nucleotide analog ribavirin. Forms an icosahedral capsid of pseudo T=3 symmetry with capsid proteins VP2 and VP3. The capsid is 300 Angstroms in diameter, composed of 60 copies of each capsid protein and enclosing the viral positive strand RNA genome. Capsid protein VP1 mainly forms the vertices of the capsid. Capsid protein VP1 interacts with host ITGA2/ITGB1 to provide virion attachment to target host cells. This attachment induces virion internalization predominantly through caveolin-mediated endocytosis. Tyrosine kinases are probably involved in the entry process. After binding to its receptor, the capsid undergoes conformational changes. Capsid protein VP1 N-terminus (that contains an amphipathic alpha-helix) and capsid protein VP4 are externalized. Together, they shape a pore in the host membrane through which viral genome is translocated to host cell cytoplasm. Functionally, forms an icosahedral capsid of pseudo T=3 symmetry with capsid proteins VP2 and VP3. The capsid is 300 Angstroms in diameter, composed of 60 copies of each capsid protein and enclosing the viral positive strand RNA genome. Its function is as follows. Lies on the inner surface of the capsid shell. After binding to the host receptor, the capsid undergoes conformational changes. Capsid protein VP4 is released, Capsid protein VP1 N-terminus is externalized, and together, they shape a pore in the host membrane through which the viral genome is translocated into the host cell cytoplasm. In terms of biological role, component of immature procapsids, which is cleaved into capsid proteins VP4 and VP2 after maturation. Allows the capsid to remain inactive before the maturation step. Cysteine protease that cleaves viral polyprotein and specific host proteins. It is responsible for the autocatalytic cleavage between the P1 and P2 regions, which is the first cleavage occurring in the polyprotein. Also cleaves the host translation initiation factor EIF4G1, in order to shut down the capped cellular mRNA translation. Inhibits the host nucleus-cytoplasm protein and RNA trafficking by cleaving host members of the nuclear pores. Counteracts stress granule formation probably by antagonizing its assembly or promoting its dissassembly. Functionally, plays an essential role in the virus replication cycle by acting as a viroporin. Creates a pore in the host endoplasmic reticulum and as a consequence releases Ca2+ in the cytoplasm of infected cell. In turn, high levels of cytoplasmic calcium may trigger membrane trafficking and transport of viral ER-associated proteins to viroplasms, sites of viral genome replication. Its function is as follows. Induces and associates with structural rearrangements of intracellular membranes. Displays RNA-binding, nucleotide binding and NTPase activities. May play a role in virion morphogenesis and viral RNA encapsidation by interacting with the capsid protein VP3. In terms of biological role, localizes the viral replication complex to the surface of membranous vesicles. Together with protein 3CD binds the Cis-Active RNA Element (CRE) which is involved in RNA synthesis initiation. Acts as a cofactor to stimulate the activity of 3D polymerase, maybe through a nucleid acid chaperone activity. Localizes the viral replication complex to the surface of membranous vesicles. It inhibits host cell endoplasmic reticulum-to-Golgi apparatus transport and causes the disassembly of the Golgi complex, possibly through GBF1 interaction. This would result in depletion of MHC, trail receptors and IFN receptors at the host cell surface. Plays an essential role in viral RNA replication by recruiting ACBD3 and PI4KB at the viral replication sites, thereby allowing the formation of the rearranged membranous structures where viral replication takes place. Functionally, acts as a primer for viral RNA replication and remains covalently bound to viral genomic RNA. VPg is uridylylated prior to priming replication into VPg-pUpU. The oriI viral genomic sequence may act as a template for this. The VPg-pUpU is then used as primer on the genomic RNA poly(A) by the RNA-dependent RNA polymerase to replicate the viral genome. During genome replication, the VPg-RNA linkage is removed by the host TDP2, thereby accelerating replication. During the late stage of the replication cycle, host TDP2 is excluded from sites of viral RNA synthesis and encapsidation, allowing for the generation of progeny virions. Its function is as follows. Involved in the viral replication complex and viral polypeptide maturation. It exhibits protease activity with a specificity and catalytic efficiency that is different from protease 3C. Protein 3CD lacks polymerase activity. Protein 3CD binds to the 5'UTR of the viral genome. In terms of biological role, replicates the viral genomic RNA on the surface of intracellular membranes. May form linear arrays of subunits that propagate along a strong head-to-tail interaction called interface-I. Covalently attaches UMP to a tyrosine of VPg, which is used to prime RNA synthesis. The positive stranded RNA genome is first replicated at virus induced membranous vesicles, creating a dsRNA genomic replication form. This dsRNA is then used as template to synthesize positive stranded RNA genomes. ss(+)RNA genomes are either translated, replicated or encapsidated. Major viral protease that mediates proteolytic processing of the polyprotein. Cleaves host EIF5B, contributing to host translation shutoff. Also cleaves host PABPC1, contributing to host translation shutoff. Cleaves host NLRP1, triggers host N-glycine-mediated degradation of the autoinhibitory NLRP1 N-terminal fragment. The protein is Genome polyprotein of Homo sapiens (Human).